The primary structure comprises 253 residues: LexA repressor (253 aa).

Positions 26 to 46 (FDEMKDALNLRSKSGIHRLIS) form a DNA-binding region, H-T-H motif. The segment at 73 to 97 (MPAATGKPPLAESGPPPVTAPATDE) is disordered. Residues S174 and K212 each act as for autocatalytic cleavage activity in the active site.

It belongs to the peptidase S24 family. Homodimer.

It catalyses the reaction Hydrolysis of Ala-|-Gly bond in repressor LexA.. Its function is as follows. Represses a number of genes involved in the response to DNA damage (SOS response), including recA and lexA. In the presence of single-stranded DNA, RecA interacts with LexA causing an autocatalytic cleavage which disrupts the DNA-binding part of LexA, leading to derepression of the SOS regulon and eventually DNA repair. This chain is LexA repressor, found in Gluconacetobacter diazotrophicus (strain ATCC 49037 / DSM 5601 / CCUG 37298 / CIP 103539 / LMG 7603 / PAl5).